The chain runs to 1025 residues: Protein mono-ADP-ribosyltransferase PARP10 (1025 aa).

Threonine 101 is subject to Phosphothreonine. Glutamate 106 is modified (ADP-ribosyl glutamic acid). The residue at position 140 (lysine 140) is an N6-(ADP-ribosyl)lysine. The disordered stretch occupies residues 318–346; sequence GIMTTGSGQEPGQSGTSLRTGPMGSLGQA. Over residues 321-336 the composition is skewed to polar residues; sequence TTGSGQEPGQSGTSLR. A phosphoserine mark is found at serine 378, serine 423, and serine 431. 2 disordered regions span residues 569-589 and 617-644; these read VLPG…DQED and LEEE…APST. Acidic residues predominate over residues 617–639; that stretch reads LEEEGPQEQPEEEVTPGHEEEEP. 2 consecutive short sequence motifs (ubiquitin-interacting) follow at residues 650 to 667 and 673 to 690; these read LEEE…LEPQ and QEEA…LLEQ. The residue at position 663 (serine 663) is a Phosphoserine. The interval 700-907 is myc binding; that stretch reads DGGTDGKAQL…CAHGFNRSFC (208 aa). Residues 806–1025 enclose the PARP catalytic domain; that stretch reads PTLAGQTLKG…SGLPGRSPDT (220 aa). Positions 831-838 match the PIP-box motif; sequence QEVVRAFY. The residue at position 882 (glutamate 882) is an ADP-ribosyl glutamic acid. Lysine 916 is subject to N6-(ADP-ribosyl)lysine. Lysine 916 carries the N6-acetyllysine modification. The segment at 1006–1025 is disordered; sequence HVPRASPDDPSGLPGRSPDT. The residue at position 1011 (serine 1011) is a Phosphoserine.

This sequence belongs to the ARTD/PARP family. As to quaternary structure, interacts with MYC. Interacts with PARP14. Interacts (via-PIP box and ubiquitin-interacting motifs) with PCNA. Post-translationally, stimulated through its phosphorylation by CDK2. Acquires CDK-dependent phosphorylation through late-G1 to S phase, and from prometaphase to cytokinesis in the nucleolar organizing regions. Phosphorylation is suppressed in growth-arrested cells. In terms of processing, auto-mono-ADP-ribosylated on glutamate and lysine residues. Highly expressed in spleen and thymus. Intermediate levels in liver, kidney, pancreas, prostate, testis, ovary, intestine, and leukocytes. Low expression in heart, brain, placenta, lung, skeletal muscle, and colon.

Its subcellular location is the nucleus. The protein resides in the nucleolus. It localises to the cytoplasm. It carries out the reaction L-lysyl-[protein] + NAD(+) = N(6)-(ADP-D-ribosyl)-L-lysyl-[protein] + nicotinamide + H(+). The catalysed reaction is L-aspartyl-[protein] + NAD(+) = 4-O-(ADP-D-ribosyl)-L-aspartyl-[protein] + nicotinamide. It catalyses the reaction L-glutamyl-[protein] + NAD(+) = 5-O-(ADP-D-ribosyl)-L-glutamyl-[protein] + nicotinamide. ADP-ribosyltransferase that mediates mono-ADP-ribosylation of glutamate and aspartate residues on target proteins. In contrast to PARP1 and PARP2, it is not able to mediate poly-ADP-ribosylation. Catalyzes mono-ADP-ribosylation of GSK3B, leading to negatively regulate GSK3B kinase activity. Involved in translesion DNA synthesis in response to DNA damage via its interaction with PCNA. In Homo sapiens (Human), this protein is Protein mono-ADP-ribosyltransferase PARP10.